Here is a 1464-residue protein sequence, read N- to C-terminus: MSDKFKLLLKQIHFPQHEEAYNEIKSGSIESVKLFKSKRQWFFVFSFRNLLSYETFTLFDNLLHSSFDSLGAKVSYMINVEDISCDQSLLEAYFSYALDILKSSHFSIYSLFSNLGIEISNNSISVKAPAHILRENLHERFIALIADVLSNVGLSNVSISVLEDKEASSSLEEAYETNKISLQEEAESQARQALQSIVQSSPVPPPQKHQAQNFAEKQSQRVASFDKAEITPMIEVNSEENRIVFEGYIFDVEQRETKTGRIIINFKVTDYTSSFAMQRWVKDSEELVKFGMIKKGNWVRVRGRIENNPFTHSLTMNVQDIKEISHTPRKDLMPEGQKRVEFHAHTNMSTMDAIPTVEELIDTAAFWGHPAVAITDHANVQSFPHGYHKAKKAGIKAIFGLEANLVEDKVPIVYNSENLELKEATYVVFDVETTGLSAVHNDLIQIAASKMHKGNIVEQFDEFIDPGYPLSAFTTELTGITDNHVKGAKPLVQVLQEFQEFCKGAVLVAHNATFDVGFMNANYERHQLPTISQPVIDTLEFARNLYPEYKRHGLGPLTKRFGVALDHHHMANYDAEATGRLLFIFIKDVFEKHGLTNLEQLNTELVSDDSYKKSRVKHATLYVQNQTGLKNIFKLVSLSNVSYFEGVARIPRKVLDEYREGIIVGSACADGEVFDTLLSHGIDKAVEVAKYYDFIEVMPPAIYAPLIAKDLIKDEEAIEQLIRDLIEVANRLDKPVLATGNVHYINPEDAIYREIIVRALGQGAMINRPIGKGENAQPAPLPEAHFRTTNEMLDEFAFLGKDLAYEIVVANTQAMANQIEEVEVVKKDLYTPYIDRAEEQVAEMTYAKAFELYGNPLPDIIDLRIEKELSSILGNGFAVIYLASQMLVNRSNERGYLVGSRGSVGSSFVATMIGITEVNPMPPHYLCPKCQHSEFITDGSYGSGFDLPDKECSECGTEYKKDGQDIPFETFLGFDGDKVPDIDLNFSGDDQPSAHLDVRDIFGEQYAFRAGTVGTVADRTAYGFVKGYERDYNKFYRDAEVDRLAMGVAGVKRNTGQHPGGIVVIPNYMDVYDFTPVQYPADDVTAAWQTTHFNFHDIDENVLKLDILGHDDPTMIRKLQDLSGIDPKDIRADDPDVMKLFSGTEVLGVTPEQIGTSTGVLGIPEFGTNFVRGMVEETHPTTFAELLQLSGLSHGTDVWLGNAQDLIKEGIATLKTVIGCRDDIMVYLMHAGLDPKMAFTIMERVRKGMWLKISEEERNGYIQAMRENNVPDWYIESCGKIKYMFPKAHAAAYVMMALRVAYFKVHHPIYYYCAYFSIRAKAFELKTMSAGLDAVKARMEDIKEKRQRNEATNLENDLFTTLEIVNEMLERGFTFGQLDLYKSQATEFLIEGDTLIPPFIALEGLGENVAKQLVAAREEGEFLSKTELRKRGGLSSTLVERLDEMGILGNMPEDNQLSLFDDFF.

Residues 426–582 enclose the Exonuclease domain; the sequence is YVVFDVETTG…YDAEATGRLL (157 aa).

The protein belongs to the DNA polymerase type-C family. PolC subfamily.

The protein localises to the cytoplasm. The enzyme catalyses DNA(n) + a 2'-deoxyribonucleoside 5'-triphosphate = DNA(n+1) + diphosphate. In terms of biological role, required for replicative DNA synthesis. This DNA polymerase also exhibits 3' to 5' exonuclease activity. This is DNA polymerase III PolC-type from Streptococcus thermophilus (strain ATCC BAA-250 / LMG 18311).